The primary structure comprises 256 residues: Ribosomal RNA small subunit methyltransferase A (256 aa).

S-adenosyl-L-methionine contacts are provided by asparagine 12, leucine 14, glycine 39, glutamate 60, aspartate 85, and asparagine 103.

This sequence belongs to the class I-like SAM-binding methyltransferase superfamily. rRNA adenine N(6)-methyltransferase family. RsmA subfamily.

The protein localises to the cytoplasm. The catalysed reaction is adenosine(1518)/adenosine(1519) in 16S rRNA + 4 S-adenosyl-L-methionine = N(6)-dimethyladenosine(1518)/N(6)-dimethyladenosine(1519) in 16S rRNA + 4 S-adenosyl-L-homocysteine + 4 H(+). Its function is as follows. Specifically dimethylates two adjacent adenosines (A1518 and A1519) in the loop of a conserved hairpin near the 3'-end of 16S rRNA in the 30S particle. May play a critical role in biogenesis of 30S subunits. The protein is Ribosomal RNA small subunit methyltransferase A of Legionella pneumophila (strain Corby).